The primary structure comprises 813 residues: LPS-assembly protein LptD (813 aa).

The signal sequence occupies residues 1-22 (MRRALRLLPLPLSIAICLPAMA).

It belongs to the LptD family. As to quaternary structure, component of the lipopolysaccharide transport and assembly complex. Interacts with LptE and LptA.

It localises to the cell outer membrane. Together with LptE, is involved in the assembly of lipopolysaccharide (LPS) at the surface of the outer membrane. This chain is LPS-assembly protein LptD, found in Xanthomonas axonopodis pv. citri (strain 306).